The following is a 1026-amino-acid chain: mRNA transport homolog 4 (1026 aa).

A Helicase ATP-binding domain is found at 134–290; it reads ILCIDNNQSV…WVASIKQQPV (157 aa). Residue 147-154 participates in ATP binding; sequence AHTSAGKT. The short motif at 238–241 is the DEIH box element; the sequence is DEIH. One can recognise a Helicase C-terminal domain in the interval 360 to 564; that stretch reads NVLKIIRSVA…NMVLNLMRVE (205 aa).

Belongs to the helicase family. SKI2 subfamily.

It is found in the nucleus. The sequence is that of mRNA transport homolog 4 (mtr-4) from Caenorhabditis elegans.